Consider the following 540-residue polypeptide: Glucose-6-phosphate isomerase (540 aa).

E350 functions as the Proton donor in the catalytic mechanism. Residues H381 and K503 contribute to the active site.

Belongs to the GPI family.

It is found in the cytoplasm. It carries out the reaction alpha-D-glucose 6-phosphate = beta-D-fructose 6-phosphate. It functions in the pathway carbohydrate biosynthesis; gluconeogenesis. The protein operates within carbohydrate degradation; glycolysis; D-glyceraldehyde 3-phosphate and glycerone phosphate from D-glucose: step 2/4. Catalyzes the reversible isomerization of glucose-6-phosphate to fructose-6-phosphate. This chain is Glucose-6-phosphate isomerase, found in Burkholderia lata (strain ATCC 17760 / DSM 23089 / LMG 22485 / NCIMB 9086 / R18194 / 383).